Consider the following 755-residue polypeptide: Tryptophan 2-monooxygenase (755 aa).

Serine 247, glutamate 267, lysine 275, and arginine 295 together coordinate FMN. Substrate is bound at residue arginine 295.

It belongs to the tryptophan 2-monooxygenase family. The cofactor is FMN.

It catalyses the reaction L-tryptophan + O2 = indole-3-acetamide + CO2 + H2O. It functions in the pathway plant hormone metabolism; auxin biosynthesis. This Agrobacterium tumefaciens (strain Ach5) protein is Tryptophan 2-monooxygenase (tms1).